A 255-amino-acid polypeptide reads, in one-letter code: Putative ankyrin repeat protein R880 (255 aa).

ANK repeat units lie at residues 79–109 (SGIN…DIHY), 110–139 (KTDY…NINT), 141–169 (DCYA…NVRK), 171–199 (RDLA…DVRS), and 201–229 (KNYA…NFRV).

The sequence is that of Putative ankyrin repeat protein R880 from Acanthamoeba polyphaga (Amoeba).